The chain runs to 274 residues: Eukaryotic translation initiation factor 3 subunit G (274 aa).

The RRM domain maps to 192 to 270 (TAIRISNLSN…LILNVEWSKP (79 aa)).

The protein belongs to the eIF-3 subunit G family. In terms of assembly, component of the eukaryotic translation initiation factor 3 (eIF-3) complex.

It is found in the cytoplasm. Its function is as follows. RNA-binding component of the eukaryotic translation initiation factor 3 (eIF-3) complex, which is involved in protein synthesis of a specialized repertoire of mRNAs and, together with other initiation factors, stimulates binding of mRNA and methionyl-tRNAi to the 40S ribosome. The eIF-3 complex specifically targets and initiates translation of a subset of mRNAs involved in cell proliferation. This subunit can bind 18S rRNA. In Bombyx mori (Silk moth), this protein is Eukaryotic translation initiation factor 3 subunit G.